A 165-amino-acid chain; its full sequence is uncharacterized protein (165 aa).

A helical transmembrane segment spans residues 16–36 (ASISSILNFFFFYIMEYFVAV).

The protein belongs to the asfivirus F165R family.

It localises to the host membrane. This is an uncharacterized protein from Ornithodoros (relapsing fever ticks).